We begin with the raw amino-acid sequence, 542 residues long: Cytochrome P450 79B1 (542 aa).

Residues 21–41 (FSNMYLLTTLQAFVAITLVML) traverse the membrane as a helical segment. C478 is a binding site for heme.

Belongs to the cytochrome P450 family. It depends on heme as a cofactor.

Its subcellular location is the membrane. Converts tyrosine to para-hydrophenylacetaldoxime in para-hydroxybenzylglucosinolate biosynthesis. The chain is Cytochrome P450 79B1 (CYP79B1) from Sinapis alba (White mustard).